The sequence spans 387 residues: Chaperone protein DnaJ (387 aa).

One can recognise a J domain in the interval 5–70; that stretch reads DYYEILEVSA…QKRQAYDQFG (66 aa). The segment at 130–208 adopts a CR-type zinc-finger fold; that stretch reads GTTVDVRIPT…CRGEGYKHSS (79 aa). Residues C143, C146, C160, C163, C182, C185, C196, and C199 each coordinate Zn(2+). CXXCXGXG motif repeat units follow at residues 143–150, 160–167, 182–189, and 196–203; these read CESCDGSG, CPTCQGIG, CPNCHGTG, and CKTCRGEG.

Belongs to the DnaJ family. In terms of assembly, homodimer. Requires Zn(2+) as cofactor.

The protein resides in the cytoplasm. In terms of biological role, participates actively in the response to hyperosmotic and heat shock by preventing the aggregation of stress-denatured proteins and by disaggregating proteins, also in an autonomous, DnaK-independent fashion. Unfolded proteins bind initially to DnaJ; upon interaction with the DnaJ-bound protein, DnaK hydrolyzes its bound ATP, resulting in the formation of a stable complex. GrpE releases ADP from DnaK; ATP binding to DnaK triggers the release of the substrate protein, thus completing the reaction cycle. Several rounds of ATP-dependent interactions between DnaJ, DnaK and GrpE are required for fully efficient folding. Also involved, together with DnaK and GrpE, in the DNA replication of plasmids through activation of initiation proteins. This chain is Chaperone protein DnaJ, found in Hydrogenovibrio crunogenus (strain DSM 25203 / XCL-2) (Thiomicrospira crunogena).